A 228-amino-acid chain; its full sequence is Ribonuclease S-4 (228 aa).

The signal sequence occupies residues 1–27 (MGITGMTYMFTMVLSLIVLIFSASTVG). Glutamine 36 is a binding site for RNA. Cysteine 42 and cysteine 49 are disulfide-bonded. Residue histidine 60 participates in RNA binding. The active-site Proton donor is the histidine 60. Cysteines 75 and 119 form a disulfide. An N-linked (GlcNAc) asparagine glycan is attached at asparagine 87. 98–99 (NV) serves as a coordination point for RNA. Asparagine 101 carries an N-linked (GlcNAc...) asparagine glycan. Residues phenylalanine 108, 111–112 (RE), and 115–116 (KH) each bind RNA. Residue glutamate 112 is part of the active site. Histidine 116 acts as the Proton acceptor in catalysis. Residues asparagine 144, asparagine 160, and asparagine 175 are each glycosylated (N-linked (GlcNAc...) asparagine). Disulfide bonds link cysteine 183–cysteine 222 and cysteine 199–cysteine 210.

The protein belongs to the RNase T2 family. Post-translationally, the N-glycans attached at Asn-101, Asn-160 and Asn-175 consist predominantly of disaccharide (GlcNAc-GlcNAc). The N-glycan at 87 is 53% monosaccharide and 47% disaccharide. The N-glycan at Asn-144 contains mannose and xylose.

The protein resides in the secreted. It localises to the extracellular space. It catalyses the reaction a ribonucleotidyl-ribonucleotide-RNA + H2O = a 3'-end 3'-phospho-ribonucleotide-RNA + a 5'-end dephospho-ribonucleoside-RNA + H(+). Its function is as follows. Self-incompatibility (SI) is the inherited ability of a flowering plant to prevent self-fertilization by discriminating between self and non-self pollen during pollination. In many species, self-incompatibility is controlled by the single, multiallelic locus S. This Pyrus pyrifolia (Chinese pear) protein is Ribonuclease S-4.